The chain runs to 270 residues: Large ribosomal subunit protein uL2c (270 aa).

The interval 221 to 245 (NPIDHPHGGGEGRAPIGRNQPKTPW) is disordered.

Belongs to the universal ribosomal protein uL2 family. As to quaternary structure, part of the 50S ribosomal subunit.

It is found in the plastid. This chain is Large ribosomal subunit protein uL2c (rpl2), found in Cuscuta gronovii (Common dodder).